A 263-amino-acid chain; its full sequence is 5'-nucleotidase SurE (263 aa).

Positions 8, 9, 40, and 93 each coordinate a divalent metal cation.

It belongs to the SurE nucleotidase family. A divalent metal cation serves as cofactor.

It is found in the cytoplasm. It carries out the reaction a ribonucleoside 5'-phosphate + H2O = a ribonucleoside + phosphate. Functionally, nucleotidase that shows phosphatase activity on nucleoside 5'-monophosphates. The protein is 5'-nucleotidase SurE of Beijerinckia indica subsp. indica (strain ATCC 9039 / DSM 1715 / NCIMB 8712).